The following is a 248-amino-acid chain: Small ribosomal subunit protein uS2 (248 aa).

This sequence belongs to the universal ribosomal protein uS2 family.

In Dechloromonas aromatica (strain RCB), this protein is Small ribosomal subunit protein uS2.